Reading from the N-terminus, the 480-residue chain is G-protein coupled receptor seb-2 (480 aa).

At 1-222 (MNPSISTAGA…CMSNGDVEAR (222 aa)) the chain is on the extracellular side. N95 carries an N-linked (GlcNAc...) asparagine glycan. A helical membrane pass occupies residues 223–243 (ILAGLLTYSASVIFLIPAVFL). The Cytoplasmic portion of the chain corresponds to 244–261 (LTLLRPIRCQPMFILHRH). Residues 262-282 (LLISCLLYGAFYLITVSLFVV) traverse the membrane as a helical segment. Over 283–305 (NDAPLSSQVFQNHLFCRLLFSIQ) the chain is Extracellular. The chain crosses the membrane as a helical span at residues 306–328 (LRYLRLTNFTWMLAEAVYLWRLL). The Cytoplasmic portion of the chain corresponds to 329–343 (HTAQHSEGETLRSYK). The chain crosses the membrane as a helical span at residues 344–364 (VICWGVPGVITVVYIFVRSLN). The Extracellular segment spans residues 365 to 386 (DDVGMCWIENSTVAWIEWMIIT). A helical membrane pass occupies residues 387–407 (PSLLAMGVNLLLLGLIVYILV). The Cytoplasmic portion of the chain corresponds to 408–423 (KKLRCDPHLERIQYRK). The chain crosses the membrane as a helical span at residues 424-444 (AVRGALMLIPVFGVQQLLTIY). The Extracellular segment spans residues 445-480 (RFRNVCLIYRLLHKSFCRRMCSEILVITSGEAGSRS).

The protein belongs to the G-protein coupled receptor 2 family. As to expression, present in the head body-wall muscles from the L1 larval stage through to adulthood. Also expressed between L4 and the adult molt in vulval vm1 muscle cells. These cells play a role in opening the vulva during egg laying.

It localises to the cell membrane. Functionally, not known. Putative receptor. This is G-protein coupled receptor seb-2 from Caenorhabditis elegans.